The sequence spans 197 residues: Probable adenylyl-sulfate kinase (197 aa).

33–40 lines the ATP pocket; sequence GLSGSGKS. Catalysis depends on S107, which acts as the Phosphoserine intermediate.

It belongs to the APS kinase family.

The catalysed reaction is adenosine 5'-phosphosulfate + ATP = 3'-phosphoadenylyl sulfate + ADP + H(+). It participates in sulfur metabolism; hydrogen sulfide biosynthesis; sulfite from sulfate: step 2/3. Its function is as follows. Catalyzes the synthesis of activated sulfate. This chain is Probable adenylyl-sulfate kinase (cysC), found in Bacillus subtilis (strain 168).